The sequence spans 523 residues: NAD(P)H-quinone oxidoreductase subunit 2 (523 aa).

13 helical membrane-spanning segments follow: residues 30 to 50 (VGPE…DLAG), 57 to 77 (WVPP…ALQW), 94 to 114 (LAIA…LISW), 128 to 148 (AAIL…TDLV), 182 to 202 (LLVG…LYGL), 223 to 243 (AALA…AVPF), 255 to 275 (PTPV…ALAL), 291 to 311 (LLFT…ALAQ), 317 to 337 (MLAY…VCGT), 345 to 365 (VLYM…IILF), 389 to 409 (LGLS…GFFG), 424 to 444 (VLVV…IGVI), and 477 to 497 (VALV…NPLF).

It belongs to the complex I subunit 2 family. In terms of assembly, NDH-1 can be composed of about 15 different subunits; different subcomplexes with different compositions have been identified which probably have different functions.

The protein localises to the cellular thylakoid membrane. It catalyses the reaction a plastoquinone + NADH + (n+1) H(+)(in) = a plastoquinol + NAD(+) + n H(+)(out). The enzyme catalyses a plastoquinone + NADPH + (n+1) H(+)(in) = a plastoquinol + NADP(+) + n H(+)(out). Functionally, NDH-1 shuttles electrons from an unknown electron donor, via FMN and iron-sulfur (Fe-S) centers, to quinones in the respiratory and/or the photosynthetic chain. The immediate electron acceptor for the enzyme in this species is believed to be plastoquinone. Couples the redox reaction to proton translocation, and thus conserves the redox energy in a proton gradient. Cyanobacterial NDH-1 also plays a role in inorganic carbon-concentration. In Synechococcus sp. (strain CC9311), this protein is NAD(P)H-quinone oxidoreductase subunit 2.